We begin with the raw amino-acid sequence, 246 residues long: Zorya protein ZorB (246 aa).

The chain crosses the membrane as a helical span at residues 20–40 (FWISYADLMTAMMVLFLVVMV). An OmpA-like domain is found at 86–218 (CHDNRISFGE…RVELRMQFFG (133 aa)).

The protein belongs to the MotB family.

It localises to the cell inner membrane. In terms of biological role, component of antiviral defense system Zorya type I, composed of ZorA, ZorB, ZorC and ZorD. Expression of Zorya type I in E.coli (strain MG1655) confers 10,000-fold resistance to phage SECphi27, 100-fold resistance to lambda, and 10-fold resistance to T7. While most T7 infected Zorya-containing cells undergo abortive infection, a minority produce viable phage progeny. These eventually accumulate to a high multiplicity of infection, leading to culture collapse by 2 hours after initial infection. ZorA and ZorB probably assemble in the cell inner membrane and exert their effect there. This is Zorya protein ZorB from Escherichia coli O139:H28 (strain E24377A / ETEC).